We begin with the raw amino-acid sequence, 329 residues long: Red chlorophyll catabolite reductase 1, chloroplastic (329 aa).

Residues 1–11 show a composition bias toward pro residues; that stretch reads MLQLRSPPPAT. The transit peptide at 1–50 directs the protein to the chloroplast; it reads MLQLRSPPPATSSPSSAVSFPTLAPRLLPLRRRRRGAGSQLGGKTSSAVR. The interval 1–61 is disordered; that stretch reads MLQLRSPPPA…SSAAAPGATE (61 aa). Low complexity-rich tracts occupy residues 12-28 and 46-59; these read SSPS…PRLL and SSAV…APGA. Red chlorophyll catabolite contacts are provided by residues E163, 216–218, and D299; that span reads YRS.

As to expression, expressed in leaves. Expressed at low levels in roots, stems, panicles and seeds.

It is found in the plastid. The protein localises to the chloroplast. The catalysed reaction is primary fluorescent chlorophyll catabolite + 2 oxidized [2Fe-2S]-[ferredoxin] = red chlorophyll catabolite + 2 reduced [2Fe-2S]-[ferredoxin] + 3 H(+). It participates in porphyrin-containing compound metabolism; chlorophyll degradation. Its function is as follows. Catalyzes the key reaction of chlorophyll catabolism, porphyrin macrocycle cleavage of pheophorbide a (pheide a) to a primary fluorescent catabolite (pFCC). Works in a two-step reaction with pheophorbide a oxygenase (PaO) by reducing the C20/C1 double bond of the intermediate, RCC. Belongs to the chlorophyll catabolic enzymes (CCEs). May play a role in senescence and response to wounding. This chain is Red chlorophyll catabolite reductase 1, chloroplastic, found in Oryza sativa subsp. japonica (Rice).